The sequence spans 403 residues: Argininosuccinate synthase (403 aa).

8-16 (AYSGGLDTS) contacts ATP. Residue Y87 participates in L-citrulline binding. Position 117 (G117) interacts with ATP. The L-aspartate site is built by T119, N123, and D124. N123 contributes to the L-citrulline binding site. Residues R127, S175, E259, and Y271 each coordinate L-citrulline.

This sequence belongs to the argininosuccinate synthase family. Type 1 subfamily. Homotetramer.

The protein resides in the cytoplasm. The catalysed reaction is L-citrulline + L-aspartate + ATP = 2-(N(omega)-L-arginino)succinate + AMP + diphosphate + H(+). Its pathway is amino-acid biosynthesis; L-arginine biosynthesis; L-arginine from L-ornithine and carbamoyl phosphate: step 2/3. In Salinispora arenicola (strain CNS-205), this protein is Argininosuccinate synthase.